The chain runs to 432 residues: Putative transposase A625R (432 aa).

Residues C375, C378, C393, and C395 each contribute to the Zn(2+) site.

In the N-terminal section; belongs to the transposase 2 family. The protein in the C-terminal section; belongs to the transposase 35 family.

In Chlorella (PBCV-1), this protein is Putative transposase A625R.